The primary structure comprises 1932 residues: DOCK-like protein 1 (1932 aa).

Positions 1410-1824 constitute a DOCKER domain; sequence LLEANRPELF…EIERYSRTLS (415 aa). Polar residues predominate over residues 1908–1921; sequence STFLAGSQPNTNTD. Residues 1908–1932 are disordered; the sequence is STFLAGSQPNTNTDSQHKHDYSHSG. Residues 1922-1932 show a composition bias toward basic and acidic residues; sequence SQHKHDYSHSG.

This sequence belongs to the DOCK family. Forms an active heterodimer with LMO1.

Its subcellular location is the cytoplasm. The protein resides in the mitochondrion. Functionally, forms a transiant heterodimeric complex with LMO1, that acts as a guanine nucleotide exchange factor exchange factor (GEF) for the small GTPase RHO5. DCK1, LMO1 and RHO5 relocate to mitochondria upon oxidative stress and trigger cell death. The DCK1/LMO1/RHO5 signaling module mediates mitochondrial turnover under nitrogen starvation conditions via mitophagy. The DCK1/LMO1/RHO5 signaling module plays also a function in cell wall integrity signaling. This chain is DOCK-like protein 1, found in Saccharomyces cerevisiae (strain ATCC 204508 / S288c) (Baker's yeast).